A 296-amino-acid polypeptide reads, in one-letter code: Protoheme IX farnesyltransferase (296 aa).

A run of 9 helical transmembrane segments spans residues I14–I34, Y36–F56, V75–I95, L99–I119, V133–A153, L163–F183, I209–A229, L234–A254, and F265–V285.

It belongs to the UbiA prenyltransferase family. Protoheme IX farnesyltransferase subfamily.

It is found in the cell inner membrane. The enzyme catalyses heme b + (2E,6E)-farnesyl diphosphate + H2O = Fe(II)-heme o + diphosphate. It functions in the pathway porphyrin-containing compound metabolism; heme O biosynthesis; heme O from protoheme: step 1/1. Functionally, converts heme B (protoheme IX) to heme O by substitution of the vinyl group on carbon 2 of heme B porphyrin ring with a hydroxyethyl farnesyl side group. The polypeptide is Protoheme IX farnesyltransferase (Yersinia enterocolitica serotype O:8 / biotype 1B (strain NCTC 13174 / 8081)).